The primary structure comprises 469 residues: Putative dipeptidase SSP1012 (469 aa).

A Zn(2+)-binding site is contributed by His84. Residue Asp86 is part of the active site. Residue Asp115 participates in Zn(2+) binding. Catalysis depends on Glu149, which acts as the Proton acceptor. The Zn(2+) site is built by Glu150, Asp173, and His440.

Belongs to the peptidase M20A family. Zn(2+) is required as a cofactor.

The polypeptide is Putative dipeptidase SSP1012 (Staphylococcus saprophyticus subsp. saprophyticus (strain ATCC 15305 / DSM 20229 / NCIMB 8711 / NCTC 7292 / S-41)).